A 308-amino-acid polypeptide reads, in one-letter code: Protein translocase subunit SecF (308 aa).

The next 6 helical transmembrane spans lie at 28–48, 140–160, 164–184, 194–214, 246–266, and 272–292; these read SIILSLISFIWIGIYKFNFGI, IEAGAMAMLFSFLAIMVYIWV, WYFGLGILIALVHDVILALGF, LSTIAAVLTIIGYSVNDSVVI, ILTVITTLLANLALILFGGEA, and VLVFFGIIAGTYSSIFISAPI.

This sequence belongs to the SecD/SecF family. SecF subfamily. Forms a complex with SecD. Part of the essential Sec protein translocation apparatus which comprises SecA, SecYEG and auxiliary proteins SecDF-YajC and YidC.

Its subcellular location is the cell inner membrane. Functionally, part of the Sec protein translocase complex. Interacts with the SecYEG preprotein conducting channel. SecDF uses the proton motive force (PMF) to complete protein translocation after the ATP-dependent function of SecA. The chain is Protein translocase subunit SecF from Rickettsia conorii (strain ATCC VR-613 / Malish 7).